We begin with the raw amino-acid sequence, 574 residues long: Sorting nexin-33 (574 aa).

The SH3 domain occupies 1–61 (MALKGRALYD…PASYVEIVRP (61 aa)). At S77 the chain carries Phosphoserine. Positions 79 to 90 (GTQGSLYSSPSM) are enriched in polar residues. The segment at 79 to 116 (GTQGSLYSSPSMASPARSGGGSGFLSNPGSFEDDDDDD) is disordered. At S92 the chain carries Phosphoserine. The PX domain occupies 230-340 (FACSIEDPTK…HFLSCLDDKQ (111 aa)). The BAR domain occupies 371-574 (LQDVEDRVDT…EKTLHMYDHL (204 aa)).

It belongs to the sorting nexin family. As to quaternary structure, homodimer (via BAR domain). Interacts with ADAM15. Interacts with FASLG. Interacts (via SH3 domain) with DNM1 and DNM2. Interacts with WASL. Interacts with FCHSD1 (via the F-BAR domain). In terms of processing, phosphorylated. Detected in brain (at protein level).

Its subcellular location is the cytoplasm. It localises to the cytosol. It is found in the membrane. The protein localises to the cytoplasmic vesicle membrane. In terms of biological role, plays a role in the reorganization of the cytoskeleton, endocytosis and cellular vesicle trafficking via its interactions with membranes, WASL, DNM1 and DNM2. Acts both during interphase and at the end of mitotic cell divisions. Required for efficient progress through mitosis and cytokinesis. Required for normal formation of the cleavage furrow at the end of mitosis. Modulates endocytosis of cell-surface proteins, such as APP and PRNP; this then modulates the secretion of APP and PRNP peptides. Promotes membrane tubulation (in vitro). May promote the formation of macropinosomes. The chain is Sorting nexin-33 (Snx33) from Mus musculus (Mouse).